The sequence spans 408 residues: 4-O-methyl-glucuronoyl methylesterase 1 (408 aa).

The N-terminal stretch at 1–19 (MASSSRFAALLLLALPALA) is a signal peptide. 3 disulfide bridges follow: Cys-31-Cys-65, Cys-218-Cys-354, and Cys-250-Cys-326. The GXSYXG catalytic site motif signature appears at 217–222 (GCSRDG). The active-site Nucleophile is the Ser-219. Lys-223, Gln-265, and Glu-273 together coordinate substrate. Asn-287 carries an N-linked (GlcNAc...) asparagine glycan. Trp-317 contributes to the substrate binding site. Asn-350 is a glycosylation site (N-linked (GlcNAc...) asparagine). Catalysis depends on His-353, which acts as the Proton donor/acceptor. 3 N-linked (GlcNAc...) asparagine glycosylation sites follow: Asn-390, Asn-395, and Asn-401.

The protein belongs to the carbohydrate esterase 15 (CE15) family.

The protein resides in the secreted. It carries out the reaction a 4-O-methyl-alpha-D-glucuronosyl ester derivative + H2O = 4-O-methyl-alpha-D-glucuronate derivative + an alcohol + H(+). Its function is as follows. Glucuronoyl esterase which may play a significant role in biomass degradation, as it is considered to disconnect hemicellulose from lignin through the hydrolysis of the ester bond between 4-O-methyl-D-glucuronic acid residues of glucuronoxylans and aromatic alcohols of lignin. Can hydrolyze benzyl glucuronic acid (BnGlcA), allyl glucuronic acid (allylGlcA) and to a lower degree methyl glucuronic acid (MeGlcA) in vitro. In Wolfiporia cocos (strain MD-104) (Brown rot fungus), this protein is 4-O-methyl-glucuronoyl methylesterase 1.